The following is a 317-amino-acid chain: Tyrosine--tRNA ligase (317 aa).

Residue Tyr33 participates in L-tyrosine binding. The 'HIGH' region signature appears at 38 to 46; that stretch reads PSGKIHMGH. 4 residues coordinate L-tyrosine: Tyr155, Gln159, Asp162, and Gln177. Residues 211 to 215 carry the 'KMSKS' region motif; that stretch reads KMASS. Ser214 serves as a coordination point for ATP.

The protein belongs to the class-I aminoacyl-tRNA synthetase family. TyrS type 3 subfamily. In terms of assembly, homodimer.

The protein resides in the cytoplasm. It carries out the reaction tRNA(Tyr) + L-tyrosine + ATP = L-tyrosyl-tRNA(Tyr) + AMP + diphosphate + H(+). Functionally, catalyzes the attachment of tyrosine to tRNA(Tyr) in a two-step reaction: tyrosine is first activated by ATP to form Tyr-AMP and then transferred to the acceptor end of tRNA(Tyr). The chain is Tyrosine--tRNA ligase from Methanosarcina barkeri (strain Fusaro / DSM 804).